A 261-amino-acid polypeptide reads, in one-letter code: Cytochrome c oxidase subunit 3 (261 aa).

Topologically, residues 1 to 15 are mitochondrial matrix; that stretch reads MTHQTHAYHMVNPSP. The helical transmembrane segment at 16–34 threads the bilayer; sequence WPLTGALSALLMTSGLAMW. Topologically, residues 35 to 40 are mitochondrial intermembrane; it reads FHFNST. The chain crosses the membrane as a helical span at residues 41–66; sequence ILLMIGLTTNTLTMYQWWRDVIREST. The Mitochondrial matrix portion of the chain corresponds to 67-72; that stretch reads FQGHHT. A helical membrane pass occupies residues 73-105; the sequence is PTVQKGLRYGMILFIISEVLFFTGFFWAFYHSS. Topologically, residues 106-128 are mitochondrial intermembrane; the sequence is LAPTPELGGCWPPTGIHPLNPLE. Residues 129–152 traverse the membrane as a helical segment; the sequence is VPLLNTSVLLASGVSITWAHHSLM. Over 153 to 155 the chain is Mitochondrial matrix; that stretch reads EGN. The helical transmembrane segment at 156–183 threads the bilayer; sequence RYPMLQALFITIALGVYFTLLQASEYYE. The Mitochondrial intermembrane segment spans residues 184 to 190; the sequence is APFTISD. The chain crosses the membrane as a helical span at residues 191 to 223; the sequence is GIYGSTFFVATGFHGLHVIIGSTFLIVCFFRQL. Topologically, residues 224–232 are mitochondrial matrix; sequence KFHFTSNHH. A helical membrane pass occupies residues 233 to 256; that stretch reads FGFEAAAWYWHFVDVVWLFLYVSI. Over 257–261 the chain is Mitochondrial intermembrane; that stretch reads YWWGS.

This sequence belongs to the cytochrome c oxidase subunit 3 family. Component of the cytochrome c oxidase (complex IV, CIV), a multisubunit enzyme composed of 14 subunits. The complex is composed of a catalytic core of 3 subunits MT-CO1, MT-CO2 and MT-CO3, encoded in the mitochondrial DNA, and 11 supernumerary subunits COX4I, COX5A, COX5B, COX6A, COX6B, COX6C, COX7A, COX7B, COX7C, COX8 and NDUFA4, which are encoded in the nuclear genome. The complex exists as a monomer or a dimer and forms supercomplexes (SCs) in the inner mitochondrial membrane with NADH-ubiquinone oxidoreductase (complex I, CI) and ubiquinol-cytochrome c oxidoreductase (cytochrome b-c1 complex, complex III, CIII), resulting in different assemblies (supercomplex SCI(1)III(2)IV(1) and megacomplex MCI(2)III(2)IV(2)).

The protein localises to the mitochondrion inner membrane. It catalyses the reaction 4 Fe(II)-[cytochrome c] + O2 + 8 H(+)(in) = 4 Fe(III)-[cytochrome c] + 2 H2O + 4 H(+)(out). Component of the cytochrome c oxidase, the last enzyme in the mitochondrial electron transport chain which drives oxidative phosphorylation. The respiratory chain contains 3 multisubunit complexes succinate dehydrogenase (complex II, CII), ubiquinol-cytochrome c oxidoreductase (cytochrome b-c1 complex, complex III, CIII) and cytochrome c oxidase (complex IV, CIV), that cooperate to transfer electrons derived from NADH and succinate to molecular oxygen, creating an electrochemical gradient over the inner membrane that drives transmembrane transport and the ATP synthase. Cytochrome c oxidase is the component of the respiratory chain that catalyzes the reduction of oxygen to water. Electrons originating from reduced cytochrome c in the intermembrane space (IMS) are transferred via the dinuclear copper A center (CU(A)) of subunit 2 and heme A of subunit 1 to the active site in subunit 1, a binuclear center (BNC) formed by heme A3 and copper B (CU(B)). The BNC reduces molecular oxygen to 2 water molecules using 4 electrons from cytochrome c in the IMS and 4 protons from the mitochondrial matrix. The protein is Cytochrome c oxidase subunit 3 (MT-CO3) of Raphicerus melanotis (Cape grysbok).